The chain runs to 155 residues: 3-hydroxyacyl-[acyl-carrier-protein] dehydratase FabZ (155 aa).

The active site involves H54.

It belongs to the thioester dehydratase family. FabZ subfamily.

Its subcellular location is the cytoplasm. The catalysed reaction is a (3R)-hydroxyacyl-[ACP] = a (2E)-enoyl-[ACP] + H2O. Its function is as follows. Involved in unsaturated fatty acids biosynthesis. Catalyzes the dehydration of short chain beta-hydroxyacyl-ACPs and long chain saturated and unsaturated beta-hydroxyacyl-ACPs. The chain is 3-hydroxyacyl-[acyl-carrier-protein] dehydratase FabZ from Burkholderia ambifaria (strain MC40-6).